The following is a 201-amino-acid chain: Holliday junction resolvase RecU (201 aa).

Mg(2+) contacts are provided by Thr-85, Asp-87, Glu-100, and Gln-119.

Belongs to the RecU family. The cofactor is Mg(2+).

The protein resides in the cytoplasm. The enzyme catalyses Endonucleolytic cleavage at a junction such as a reciprocal single-stranded crossover between two homologous DNA duplexes (Holliday junction).. Functionally, endonuclease that resolves Holliday junction intermediates in genetic recombination. Cleaves mobile four-strand junctions by introducing symmetrical nicks in paired strands. Promotes annealing of linear ssDNA with homologous dsDNA. Required for DNA repair, homologous recombination and chromosome segregation. This Geobacillus thermodenitrificans (strain NG80-2) protein is Holliday junction resolvase RecU.